The primary structure comprises 660 residues: Glutenin, high molecular weight subunit 12 (660 aa).

Residues 1-21 (MAKRLVLFAAVVIALVALTTA) form the signal peptide. Positions 127–136 (YYPSVTSPRQ) are enriched in polar residues. The disordered stretch occupies residues 127–660 (YYPSVTSPRQ…EGGDALSASQ (534 aa)). Low complexity-rich tracts occupy residues 141 to 166 (PGQASPQQPGQGQQPGKWQEPGQGQQ), 187 to 200 (QGYYPTSLQQPGQG), 208 to 248 (QGYY…WQQG), and 255 to 275 (QQLGQGQQPGQWQQSGQGQQG). The span at 276–286 (HYPTSLQQPGQ) shows a compositional bias: polar residues. Positions 296 to 365 (QQQPAQGQQG…QQQPGQGQQG (70 aa)) are enriched in low complexity. Positions 370-384 (SLQQPGQQGHYPTSL) are enriched in polar residues. Low complexity-rich tracts occupy residues 385–426 (QQLG…GQQG), 478–514 (PGQRQQPGQGQHPEQGQQPGQGQQGYYPTSPQQPGQG), 522–535 (QGYYPTSPQQPGQG), and 551–577 (QQTGQAQQLGQGQQIGQVQQPGQGQQG). Residues 590 to 604 (QQSGQGQQSGQGHQP) show a composition bias toward gly residues.

This sequence belongs to the gliadin/glutenin family. As to quaternary structure, disulfide-bridge linked aggregates.

Glutenins are high-molecular weight seed storage proteins of wheat endosperm. Thought to be responsible for the visco-elastic property of wheat dough. This chain is Glutenin, high molecular weight subunit 12, found in Triticum aestivum (Wheat).